The primary structure comprises 132 residues: Sec-independent protein translocase protein TatB (132 aa).

Residues 2–22 (FDGIGFMELLLIGILGLVVLG) form a helical membrane-spanning segment. Polar residues-rich tracts occupy residues 86–95 (LKQAAQSVNR) and 116–132 (IAET…KNNG). The interval 86 to 132 (LKQAAQSVNRPYQLDESNEQEPKIAPPQANIAETPTQSGDTHSKNNG) is disordered.

It belongs to the TatB family. In terms of assembly, the Tat system comprises two distinct complexes: a TatABC complex, containing multiple copies of TatA, TatB and TatC subunits, and a separate TatA complex, containing only TatA subunits. Substrates initially bind to the TatABC complex, which probably triggers association of the separate TatA complex to form the active translocon.

Its subcellular location is the cell inner membrane. Functionally, part of the twin-arginine translocation (Tat) system that transports large folded proteins containing a characteristic twin-arginine motif in their signal peptide across membranes. Together with TatC, TatB is part of a receptor directly interacting with Tat signal peptides. TatB may form an oligomeric binding site that transiently accommodates folded Tat precursor proteins before their translocation. This chain is Sec-independent protein translocase protein TatB, found in Shewanella denitrificans (strain OS217 / ATCC BAA-1090 / DSM 15013).